Consider the following 287-residue polypeptide: Phosphoribosylaminoimidazole-succinocarboxamide synthase (287 aa).

Belongs to the SAICAR synthetase family.

The enzyme catalyses 5-amino-1-(5-phospho-D-ribosyl)imidazole-4-carboxylate + L-aspartate + ATP = (2S)-2-[5-amino-1-(5-phospho-beta-D-ribosyl)imidazole-4-carboxamido]succinate + ADP + phosphate + 2 H(+). It participates in purine metabolism; IMP biosynthesis via de novo pathway; 5-amino-1-(5-phospho-D-ribosyl)imidazole-4-carboxamide from 5-amino-1-(5-phospho-D-ribosyl)imidazole-4-carboxylate: step 1/2. This is Phosphoribosylaminoimidazole-succinocarboxamide synthase from Neisseria meningitidis serogroup B (strain ATCC BAA-335 / MC58).